We begin with the raw amino-acid sequence, 336 residues long: Glucokinase (336 aa).

ATP is bound at residue 13 to 18; it reads ADVGGT.

It belongs to the bacterial glucokinase family.

It is found in the cytoplasm. It catalyses the reaction D-glucose + ATP = D-glucose 6-phosphate + ADP + H(+). The polypeptide is Glucokinase (Cupriavidus metallidurans (strain ATCC 43123 / DSM 2839 / NBRC 102507 / CH34) (Ralstonia metallidurans)).